Here is a 427-residue protein sequence, read N- to C-terminus: Isocitrate lyase (427 aa).

Residue 89-91 (SGW) coordinates substrate. Asp-150 provides a ligand contact to Mg(2+). Catalysis depends on Cys-188, which acts as the Proton acceptor. Substrate-binding positions include 189–190 (GH), Arg-225, 310–314 (NCSPS), and Thr-344.

The protein belongs to the isocitrate lyase/PEP mutase superfamily. Isocitrate lyase family. In terms of assembly, homotetramer. It depends on Mg(2+) as a cofactor.

It carries out the reaction D-threo-isocitrate = glyoxylate + succinate. It functions in the pathway carbohydrate metabolism; glyoxylate cycle; (S)-malate from isocitrate: step 1/2. Functionally, involved in the metabolic adaptation in response to environmental changes. Catalyzes the reversible formation of succinate and glyoxylate from isocitrate, a key step of the glyoxylate cycle, which operates as an anaplerotic route for replenishing the tricarboxylic acid cycle during growth on fatty acid substrates. In Halalkalibacterium halodurans (strain ATCC BAA-125 / DSM 18197 / FERM 7344 / JCM 9153 / C-125) (Bacillus halodurans), this protein is Isocitrate lyase (aceA).